The following is a 363-amino-acid chain: UDP-N-acetylglucosamine--N-acetylmuramyl-(pentapeptide) pyrophosphoryl-undecaprenol N-acetylglucosamine transferase (363 aa).

Residues 15–17 (TGG), Asn127, Arg163, Ser191, Ile244, 263–268 (ALTVSE), and Gln288 contribute to the UDP-N-acetyl-alpha-D-glucosamine site.

Belongs to the glycosyltransferase 28 family. MurG subfamily.

Its subcellular location is the cell inner membrane. The catalysed reaction is di-trans,octa-cis-undecaprenyl diphospho-N-acetyl-alpha-D-muramoyl-L-alanyl-D-glutamyl-meso-2,6-diaminopimeloyl-D-alanyl-D-alanine + UDP-N-acetyl-alpha-D-glucosamine = di-trans,octa-cis-undecaprenyl diphospho-[N-acetyl-alpha-D-glucosaminyl-(1-&gt;4)]-N-acetyl-alpha-D-muramoyl-L-alanyl-D-glutamyl-meso-2,6-diaminopimeloyl-D-alanyl-D-alanine + UDP + H(+). The protein operates within cell wall biogenesis; peptidoglycan biosynthesis. Functionally, cell wall formation. Catalyzes the transfer of a GlcNAc subunit on undecaprenyl-pyrophosphoryl-MurNAc-pentapeptide (lipid intermediate I) to form undecaprenyl-pyrophosphoryl-MurNAc-(pentapeptide)GlcNAc (lipid intermediate II). The sequence is that of UDP-N-acetylglucosamine--N-acetylmuramyl-(pentapeptide) pyrophosphoryl-undecaprenol N-acetylglucosamine transferase from Pectobacterium carotovorum subsp. carotovorum (strain PC1).